A 1422-amino-acid polypeptide reads, in one-letter code: YEATS domain-containing protein 2 (1422 aa).

Lys9 is covalently cross-linked (Glycyl lysine isopeptide (Lys-Gly) (interchain with G-Cter in SUMO2)). Residues 47 to 80 (KEQFALEMKNKEHEIEVIDQRLIEARRMMDKLRA) adopt a coiled-coil conformation. Lys113 participates in a covalent cross-link: Glycyl lysine isopeptide (Lys-Gly) (interchain with G-Cter in SUMO2). Residues 117 to 198 (ESPSRSSSPA…KTEQRNADLT (82 aa)) form a disordered region. A phosphoserine mark is found at Ser118, Ser120, and Ser157. Polar residues predominate over residues 119–148 (PSRSSSPANQRAETPSANHSESDSLSQHND). A compositionally biased stretch (basic and acidic residues) spans 149–165 (FLSDKDNNSNMDIEERL). Over residues 166–176 (SNNMEQRPSRN) the composition is skewed to polar residues. Over residues 177-198 (TGRDTSRITGSHKTEQRNADLT) the composition is skewed to basic and acidic residues. Lys189 participates in a covalent cross-link: Glycyl lysine isopeptide (Lys-Gly) (interchain with G-Cter in SUMO2). In terms of domain architecture, YEATS spans 200–345 (ETSRLFVKKT…EDCIYPQSSE (146 aa)). 2 histone H3K27cr binding regions span residues 259 to 261 (HPS) and 282 to 284 (WGE). Lys370 is covalently cross-linked (Glycyl lysine isopeptide (Lys-Gly) (interchain with G-Cter in SUMO2)). A Phosphothreonine modification is found at Thr407. A phosphoserine mark is found at Ser447, Ser463, Ser465, Ser471, and Ser473. Positions 465–486 (SPISTPSPSPLPRTPTSTPVHV) are disordered. Position 478 is a phosphothreonine (Thr478). Lys487 is covalently cross-linked (Glycyl lysine isopeptide (Lys-Gly) (interchain with G-Cter in SUMO2)). Over residues 513–535 (TTPSTGSPTNKISTASQVSQGTG) the composition is skewed to polar residues. Positions 513–540 (TTPSTGSPTNKISTASQVSQGTGSPVPK) are disordered. Ser536 carries the phosphoserine modification. Lys552 participates in a covalent cross-link: Glycyl lysine isopeptide (Lys-Gly) (interchain with G-Cter in SUMO2). The residue at position 575 (Ser575) is a Phosphoserine. Residue Lys592 forms a Glycyl lysine isopeptide (Lys-Gly) (interchain with G-Cter in SUMO2) linkage. A Phosphoserine modification is found at Ser627. Residues Lys649 and Lys773 each participate in a glycyl lysine isopeptide (Lys-Gly) (interchain with G-Cter in SUMO2) cross-link. The disordered stretch occupies residues 794 to 842 (GSAASGGSGAGGGGGGGGGGGSGSGGGGSTGGGGGTAGGGTQSTAGPGG). The segment covering 797-842 (ASGGSGAGGGGGGGGGGGSGSGGGGSTGGGGGTAGGGTQSTAGPGG) has biased composition (gly residues). Lys923 is covalently cross-linked (Glycyl lysine isopeptide (Lys-Gly) (interchain with G-Cter in SUMO2)). Lys1110 is covalently cross-linked (Glycyl lysine isopeptide (Lys-Gly) (interchain with G-Cter in SUMO1); alternate). Lys1110 participates in a covalent cross-link: Glycyl lysine isopeptide (Lys-Gly) (interchain with G-Cter in SUMO2); alternate. A Glycyl lysine isopeptide (Lys-Gly) (interchain with G-Cter in SUMO2) cross-link involves residue Lys1130. Residue Thr1219 is modified to Phosphothreonine. Residues Lys1222 and Lys1285 each participate in a glycyl lysine isopeptide (Lys-Gly) (interchain with G-Cter in SUMO2) cross-link.

Component of the ADA2A-containing complex (ATAC), composed of KAT14, KAT2A, TADA2L, TADA3L, ZZ3, MBIP, WDR5, YEATS2, SGF29 and DR1.

The protein localises to the nucleus. Its function is as follows. Chromatin reader component of the ATAC complex, a complex with histone acetyltransferase activity on histones H3 and H4. YEATS2 specifically recognizes and binds histone H3 crotonylated at 'Lys-27' (H3K27cr). Crotonylation marks active promoters and enhancers and confers resistance to transcriptional repressors. The sequence is that of YEATS domain-containing protein 2 from Homo sapiens (Human).